The following is a 314-amino-acid chain: Homoserine kinase (314 aa).

Residue 95 to 105 (PHSRGLGSSAA) coordinates ATP.

Belongs to the GHMP kinase family. Homoserine kinase subfamily.

It is found in the cytoplasm. It catalyses the reaction L-homoserine + ATP = O-phospho-L-homoserine + ADP + H(+). The protein operates within amino-acid biosynthesis; L-threonine biosynthesis; L-threonine from L-aspartate: step 4/5. Functionally, catalyzes the ATP-dependent phosphorylation of L-homoserine to L-homoserine phosphate. In Mycobacterium sp. (strain JLS), this protein is Homoserine kinase.